The sequence spans 309 residues: Metal ABC transporter substrate-binding lipoprotein FimA (309 aa).

The signal sequence occupies residues 1–20 (MKKIASVLALFVALLFGLLA). The N-palmitoyl cysteine moiety is linked to residue Cys-21. A lipid anchor (S-diacylglycerol cysteine) is attached at Cys-21. A divalent metal cation is bound by residues His-67, His-139, Glu-205, and Asp-280.

It belongs to the bacterial solute-binding protein 9 family. Lipoprotein receptor antigen (Lrai) subfamily.

It localises to the cell membrane. Functionally, part of an ATP-binding cassette (ABC) transport system involved in metal import. Binds a metal with high affinity and specificity and delivers it to the membrane permease for translocation into the cytoplasm. Also acts as an adhesin which is involved on adherence to extracellular matrix. It is an important factor in pathogenesis and infection. May contribute to the formation and accumulation of dental plaque. The sequence is that of Metal ABC transporter substrate-binding lipoprotein FimA (fimA) from Streptococcus parasanguinis.